The primary structure comprises 328 residues: Formimidoylglutamase (328 aa).

Mn(2+)-binding residues include histidine 133, aspartate 159, histidine 161, aspartate 163, aspartate 253, and aspartate 255.

The protein belongs to the arginase family. It depends on Mn(2+) as a cofactor.

It catalyses the reaction N-formimidoyl-L-glutamate + H2O = formamide + L-glutamate. It functions in the pathway amino-acid degradation; L-histidine degradation into L-glutamate; L-glutamate from N-formimidoyl-L-glutamate (hydrolase route): step 1/1. Its function is as follows. Catalyzes the conversion of N-formimidoyl-L-glutamate to L-glutamate and formamide. In Streptococcus pyogenes serotype M6 (strain ATCC BAA-946 / MGAS10394), this protein is Formimidoylglutamase.